Here is an 89-residue protein sequence, read N- to C-terminus: Small ribosomal subunit protein uS15 (89 aa).

It belongs to the universal ribosomal protein uS15 family. As to quaternary structure, part of the 30S ribosomal subunit. Forms a bridge to the 50S subunit in the 70S ribosome, contacting the 23S rRNA.

Its function is as follows. One of the primary rRNA binding proteins, it binds directly to 16S rRNA where it helps nucleate assembly of the platform of the 30S subunit by binding and bridging several RNA helices of the 16S rRNA. Forms an intersubunit bridge (bridge B4) with the 23S rRNA of the 50S subunit in the ribosome. In Shewanella frigidimarina (strain NCIMB 400), this protein is Small ribosomal subunit protein uS15.